Consider the following 140-residue polypeptide: Arsenate reductase (140 aa).

The Nucleophile; cysteine thioarsenate intermediate role is filled by Cys11.

This sequence belongs to the ArsC family.

The catalysed reaction is [glutaredoxin]-dithiol + arsenate + glutathione + H(+) = glutathionyl-S-S-[glutaredoxin] + arsenite + H2O. Functionally, involved in resistance to arsenate. Catalyzes the reduction of arsenate [As(V)] to arsenite [As(III)]. The resulting arsenite is then extruded from the cell via the aquaglyceroporin AqpS. Does not display antimonate reductase activity. This Rhizobium meliloti (strain 1021) (Ensifer meliloti) protein is Arsenate reductase.